Here is a 37-residue protein sequence, read N- to C-terminus: Large ribosomal subunit protein bL36c (37 aa).

This sequence belongs to the bacterial ribosomal protein bL36 family.

It is found in the plastid. This chain is Large ribosomal subunit protein bL36c, found in Helicosporidium sp. subsp. Simulium jonesii (Green alga).